Consider the following 301-residue polypeptide: Rhodopsin (301 aa).

Residues 1–18 lie on the Extracellular side of the membrane; the sequence is LHMIHLHWYQYPPMNPMM. A helical membrane pass occupies residues 19 to 43; sequence YPLLLIFMLFTGILCLAGNFVTIWV. Topologically, residues 44–55 are cytoplasmic; that stretch reads FMNTKSLRTPAN. A helical membrane pass occupies residues 56 to 78; it reads LLVVNLAMSDFLMMFTMFPPMMV. Topologically, residues 79-92 are extracellular; the sequence is TCYYHTWTLGPTFC. Cysteine 92 and cysteine 169 form a disulfide bridge. A helical transmembrane segment spans residues 93–115; that stretch reads QVYAFLGNLCGCASIWTMVFITF. A 'Ionic lock' involved in activated form stabilization motif is present at residues 116–118; sequence DRY. Over 116–134 the chain is Cytoplasmic; the sequence is DRYNVIVKGVAGEPLSTKK. Residues 135–155 form a helical membrane-spanning segment; it reads ASLWILTIWVLSTTWCIAPFF. Topologically, residues 156 to 182 are extracellular; it reads GWNHYVPEGNLTGCGTDYLSEDILSRS. The N-linked (GlcNAc...) asparagine glycan is linked to asparagine 165. A helical membrane pass occupies residues 183 to 204; the sequence is YLYVYSTWVYFLPLAITIYCYV. The Cytoplasmic segment spans residues 205-245; the sequence is FIIKAVAAHEKGMRDQAKKMGIKSLRNEEAQKTSAECRLAK. The chain crosses the membrane as a helical span at residues 246–267; sequence IAMTTVALWFIAWTPCLLINWV. Topologically, residues 268–278 are extracellular; it reads GMFARSYLSPV. A helical membrane pass occupies residues 279 to 300; that stretch reads YTIWGYVFAKANAVYNPIVYAI. Position 288 is an N6-(retinylidene)lysine (lysine 288).

The protein belongs to the G-protein coupled receptor 1 family. Opsin subfamily. In terms of assembly, homodimer. Interacts with GNAQ. In terms of processing, contains one covalently linked retinal chromophore.

Its subcellular location is the cell projection. It localises to the rhabdomere membrane. Functionally, photoreceptor required for image-forming vision at low light intensity. Can use both retinal and 3-dehydroretinal as visual pigment. Light-induced isomerization of 11-cis to all-trans retinal triggers a conformational change that activates signaling via G-proteins. Signaling via GNAQ probably mediates the activation of phospholipase C. This chain is Rhodopsin (RHO), found in Procambarus seminolae (Crayfish).